The sequence spans 330 residues: Aspartate--ammonia ligase (330 aa).

The protein belongs to the class-II aminoacyl-tRNA synthetase family. AsnA subfamily.

It is found in the cytoplasm. It carries out the reaction L-aspartate + NH4(+) + ATP = L-asparagine + AMP + diphosphate + H(+). It participates in amino-acid biosynthesis; L-asparagine biosynthesis; L-asparagine from L-aspartate (ammonia route): step 1/1. This chain is Aspartate--ammonia ligase, found in Klebsiella pneumoniae subsp. pneumoniae (strain ATCC 700721 / MGH 78578).